We begin with the raw amino-acid sequence, 541 residues long: Atlastin (541 aa).

At 1–424 (MGGSAVQVIN…NIFKAARTPA (424 aa)) the chain is on the cytoplasmic side. The region spanning 35-284 (DRFVCVVSVA…LVPMLLAPDN (250 aa)) is the GB1/RHD3-type G domain. Residues Arg-48, Lys-49, Gly-50, Lys-51, and Ser-52 each contribute to the GDP site. Arg-48, Lys-49, Gly-50, Lys-51, Ser-52, and Phe-53 together coordinate GTP. A Mg(2+)-binding site is contributed by Ser-52. Asp-121 contributes to the Mg(2+) binding site. The GDP site is built by Arg-192, Asp-193, and Val-251. GTP is bound by residues Arg-192, Asp-193, and Val-251. The 3HB (three-helix bundle) domain stretch occupies residues 322–413 (MLVATAEANH…FTNYQAHNES (92 aa)). The tract at residues 414–422 (KNIFKAART) is linker. Residues 425 to 445 (VYFACAVIMYILSGIFGLVGL) form a helical membrane-spanning segment. Topologically, residues 446-448 (YTF) are lumenal. The chain crosses the membrane as a helical span at residues 449–469 (ANFCNLVMGVALLTLALWAYI). Residues 470–541 (RYSGELSDFG…NASNGKVKRS (72 aa)) lie on the Cytoplasmic side of the membrane. Position 514 is a phosphothreonine (Thr-514).

This sequence belongs to the TRAFAC class dynamin-like GTPase superfamily. GB1/RHD3 GTPase family. GB1 subfamily. In terms of assembly, monomeric and homodimeric. The homodimer, transiently formed by two molecules on opposing membranes, is the active form mediating ER membrane fusion. Interacts with spas; interaction may regulate microtubule dynamics. As to expression, ubiquitously expressed.

It localises to the endoplasmic reticulum membrane. It is found in the golgi apparatus membrane. It catalyses the reaction GTP + H2O = GDP + phosphate + H(+). Its function is as follows. Membrane-anchored GTPase that mediates the GTP-dependent fusion of endoplasmic reticulum (ER) membranes, maintaining the continuous ER network. It facilitates the formation of three-way junctions where ER tubules intersect. Two atlastin-1 on neighboring ER tubules bind GTP and form loose homodimers through the GB1/RHD3-type G domains and 3HB regions. Upon GTP hydrolysis, the 3HB regions tighten, pulling the membranes together to drive their fusion. After fusion, the homodimer disassembles upon release of inorganic phosphate (Pi). Subsequently, GDP dissociates, resetting the monomers to a conformation ready for a new fusion cycle. May also regulate more or less directly Golgi biogenesis. May also regulate microtubule polymerization and Golgi biogenesis. Required for dopaminergic neurons survival and the growth of muscles and synapses at neuromuscular junctions. This Drosophila melanogaster (Fruit fly) protein is Atlastin (atl).